A 391-amino-acid chain; its full sequence is Oxytocin receptor (391 aa).

Residues 1–38 lie on the Extracellular side of the membrane; it reads MEGAFAANWSAEAVNGSAAPPGTEGNRTAGPPQRNEAL. N-linked (GlcNAc...) asparagine glycans are attached at residues Asn-8, Asn-15, and Asn-26. A helical transmembrane segment spans residues 39–63; that stretch reads ARVEVAVLCLILFLALSGNACVLLA. Residues 64–74 are Cytoplasmic-facing; the sequence is LRTTRHKHSRL. The helical transmembrane segment at 75–97 threads the bilayer; that stretch reads FFFMKHLSIADLVVAVFQVLPQL. Topologically, residues 98-113 are extracellular; the sequence is LWDITFRFYGPDLLCR. A disulfide bridge links Cys-112 with Cys-187. Residues 114–135 traverse the membrane as a helical segment; the sequence is LVKYLQVVGMFASTYLLLLMSL. Residues 136-154 are Cytoplasmic-facing; that stretch reads DRCLAICQPLRSLSRRTDR. Residues 155-175 traverse the membrane as a helical segment; it reads LAVLVTWLGCLVASAPQVHIF. Residues 176 to 202 are Extracellular-facing; that stretch reads SLREVADGVFDCWAVFIQPWGPKAYIT. The helical transmembrane segment at 203–225 threads the bilayer; the sequence is WITLAVYIVPVIVLATCYGLISF. Residues 226-277 lie on the Cytoplasmic side of the membrane; it reads KIWQNLRLKTAAAAAEAAAGAEGEAADWAGRAILARVSNVKLISKAKIRTVK. Residues 278–296 form a helical membrane-spanning segment; the sequence is MTFIVVLAFIVCWTPFFFV. The Extracellular segment spans residues 297-311; that stretch reads QMWSVWDADAPKEAS. A helical membrane pass occupies residues 312 to 334; that stretch reads PFIIAMLLASLNSCCNPWIYMLF. Residues 335-391 lie on the Cytoplasmic side of the membrane; it reads TGHLFQELVQRFLCCSFRRLKGSRPGETSVSKKSNSSTFVLSQYSSSQRRCSQPSTL. Residues Ser-368 and Ser-370 each carry the phosphoserine modification.

The protein belongs to the G-protein coupled receptor 1 family. Vasopressin/oxytocin receptor subfamily.

Its subcellular location is the cell membrane. In terms of biological role, receptor for oxytocin. The activity of this receptor is mediated by G proteins which activate a phosphatidylinositol-calcium second messenger system. This chain is Oxytocin receptor (OXTR), found in Bos taurus (Bovine).